A 557-amino-acid chain; its full sequence is MTMLKDPSKKYRAFPTIDLPDRTWPSKTITEAPIWCSSDLRDGNQSLIEPMDSEKKLRFWKTLVQVGVKEIEASFPSASQTDFDFVRTLIQDGHIPDDTTIQVLTQAREDLIARTFESLRGAKKAIVHLYNATSPSFRRIVFNQDKQGVKDIAVNAAKLFVKYAAQQPETHWTFQYSPETFSATEMEFAKEVCDAVIEVWNPTPEHKIILNLPATVEVSTPNIYADQIEWFCRNVSRRDSVIISLHCHNDRGTGIAATELGLMAGADRAEGCLFGNGERTGNVDLVTLALNLYTQGIDPQLDFSDIDGVRKVVEECNQLPVHPRHPYVGDLVHTAFSGSHQDAIRKGFAKQQEGERWEVPYLPIDPADIGRSYEAVIRVNSQSGKGGITYLLEQEYGISLPRRMQIEFSQVVQGETDRLGLEMTAQQIYSLLHKEYLQANAPYALVSHRLQEENGHSAVEVEVAGEGETTLHWRGKGNGALEALVAGLPIAVEIMDYNEHAIGAGTNAKAAAYIELRVAGGRPVHGVGIDENITTASFKALFSALNRSLSQQEAKAA.

Positions 33 to 307 (PIWCSSDLRD…DPQLDFSDID (275 aa)) constitute a Pyruvate carboxyltransferase domain. Residues Asp42, His246, His248, and Asn282 each contribute to the Mg(2+) site. The regulatory domain stretch occupies residues 439 to 557 (ANAPYALVSH…SLSQQEAKAA (119 aa)).

Belongs to the alpha-IPM synthase/homocitrate synthase family. LeuA type 2 subfamily. In terms of assembly, homodimer. Mg(2+) serves as cofactor.

The protein localises to the cytoplasm. It carries out the reaction 3-methyl-2-oxobutanoate + acetyl-CoA + H2O = (2S)-2-isopropylmalate + CoA + H(+). The protein operates within amino-acid biosynthesis; L-leucine biosynthesis; L-leucine from 3-methyl-2-oxobutanoate: step 1/4. Its function is as follows. Catalyzes the condensation of the acetyl group of acetyl-CoA with 3-methyl-2-oxobutanoate (2-ketoisovalerate) to form 3-carboxy-3-hydroxy-4-methylpentanoate (2-isopropylmalate). This Pseudomonas putida (strain GB-1) protein is 2-isopropylmalate synthase.